The sequence spans 414 residues: Transcriptional repressor protein YY1 (414 aa).

Residues 1–170 (MASGDTLYIA…GGGSSSSGGG (170 aa)) are interaction with the SMAD1/SMAD4 complex. The interval 33 to 81 (VETIETTVVGEEEEEDDDDEDGGGGDHGGGGGHGHAGHHHHHHHHHHHP) is disordered. Residues 42-55 (GEEEEEDDDDEDGG) show a composition bias toward acidic residues. The segment covering 57–66 (GDHGGGGGHG) has biased composition (gly residues). The segment covering 67–81 (HAGHHHHHHHHHHHP) has biased composition (basic residues). The tract at residues 116-260 (DDSDGLRAED…YSEYMTGKKL (145 aa)) is gly-rich region involved in interaction with HCFC1. Serine 118 is modified (phosphoserine; by CK2). Residues 157–203 (GKSGGGGSSSSGGGRVKKGGGKKSGKKSYLSGGAGAAGGGGADPGNK) are disordered. Residues 158–170 (KSGGGGSSSSGGG) show a composition bias toward gly residues. The span at 171-182 (RVKKGGGKKSGK) shows a compositional bias: basic residues. Glycyl lysine isopeptide (Lys-Gly) (interchain with G-Cter in SUMO2) cross-links involve residues lysine 182 and lysine 183. Serine 187 is modified (phosphoserine). Residues 188–199 (GGAGAAGGGGAD) are compositionally biased toward gly residues. Glycyl lysine isopeptide (Lys-Gly) (interchain with G-Cter in SUMO2) cross-links involve residues lysine 208 and lysine 230. The residue at position 247 (serine 247) is a Phosphoserine. An involved in nuclear matrix association region spans residues 257-341 (GKKLPPGGIP…KAFVESSKLK (85 aa)). Glycyl lysine isopeptide (Lys-Gly) (interchain with G-Cter in SUMO2) cross-links involve residues lysine 286 and lysine 288. The tract at residues 295–414 (TIACPHKGCT…LTHAKAKNNQ (120 aa)) is binding to DNA. 3 consecutive C2H2-type zinc fingers follow at residues 296–320 (IACP…LHTH), 325–347 (HVCA…QLVH), and 353–377 (FQCT…VRIH). Residues cysteine 298, cysteine 303, histidine 316, histidine 320, cysteine 327, cysteine 330, histidine 343, histidine 347, cysteine 355, cysteine 360, histidine 373, and histidine 377 each coordinate Zn(2+). The involved in repression of activated transcription stretch occupies residues 333–371 (AFVESSKLKRHQLVHTGEKPFQCTFEGCGKRFSLDFNLR). An involved in masking transactivation domain region spans residues 371 to 397 (RTHVRIHTGDRPYVCPFDGCNKKFAQS). A Phosphothreonine modification is found at threonine 378. Residues 383-407 (YVCPFDGCNKKFAQSTNLKSHILTH) form a C2H2-type 4 zinc finger. Positions 385, 390, 403, and 407 each coordinate Zn(2+). Residues lysine 409 and lysine 411 each participate in a glycyl lysine isopeptide (Lys-Gly) (interchain with G-Cter in SUMO2) cross-link.

This sequence belongs to the YY transcription factor family. In terms of assembly, interacts with YAF2 through the region encompassing the first and second zinc fingers. Component of the chromatin remodeling INO80 complex; specifically part of a complex module associated with the DBINO domain of INO80. Interacts with EED and EZH2; the interactions are indicative for an association with the PRC2/EED-EZH2 complex. Interacts with SFMBT2. Found in a complex with SMAD1 and SMAD4. Found in a complex with YY1, SIN3A and HDAC1. Accessory component of the polycomb repressive deubiquitinase (PR-DUB) complex, at least composed of BAP1, one of ASXL1, ASXL2 or (probably) ASXL3 and one of MBD5 or MBD6; the PR-DUB core associates with a number of accessory proteins, including FOXK1, FOXK2, KDM1B, HCFC1, YY1 and OGT. Interacts (via Gly-rich region) with HCFC1; the interaction is direct. Interacts (via C-terminal zinc-finger domains) with BAP1 (via ULD domain); the interaction is direct and requires HCFC1. In terms of processing, phosphorylation at Ser-118 by CK2 prevents proteolytic cleavage by caspase-7 (CASP7) during apoptosis. Post-translationally, proteolytically cleaved by caspase-7 (CASP7) in response to apoptosis. Phosphorylation at Ser-118 protects against proteolytic cleavage. Transiently poly-ADP-ribosylated by PARP1 upon DNA damage, with the effect of decreasing affinity of YY1 to its cognate DNA binding sites. In terms of processing, ubiquitinated.

It is found in the nucleus matrix. Functionally, multifunctional transcription factor that exhibits positive and negative control on a large number of cellular and viral genes by binding to sites overlapping the transcription start site. Binds to the consensus sequence 5'-CCGCCATNTT-3'; some genes have been shown to contain a longer binding motif allowing enhanced binding; the initial CG dinucleotide can be methylated greatly reducing the binding affinity. The effect on transcription regulation is depending upon the context in which it binds and diverse mechanisms of action include direct activation or repression, indirect activation or repression via cofactor recruitment, or activation or repression by disruption of binding sites or conformational DNA changes. Its activity is regulated by transcription factors and cytoplasmic proteins that have been shown to abrogate or completely inhibit YY1-mediated activation or repression. For example, it acts as a repressor in absence of adenovirus E1A protein but as an activator in its presence. Acts synergistically with the SMAD1 and SMAD4 in bone morphogenetic protein (BMP)-mediated cardiac-specific gene expression. Binds to SMAD binding elements (SBEs) (5'-GTCT/AGAC-3') within BMP response element (BMPRE) of cardiac activating regions. May play an important role in development and differentiation. Proposed to recruit the PRC2/EED-EZH2 complex to target genes that are transcriptional repressed. Involved in DNA repair. In vitro, binds to DNA recombination intermediate structures (Holliday junctions). Plays a role in regulating enhancer activation. Recruits the PR-DUB complex to specific gene-regulatory regions. Proposed core component of the chromatin remodeling INO80 complex which is involved in transcriptional regulation, DNA replication and probably DNA repair; proposed to target the INO80 complex to YY1-responsive elements. This Homo sapiens (Human) protein is Transcriptional repressor protein YY1 (YY1).